The chain runs to 695 residues: MSHLWCWLFLVLCLACLVLSIEAKDSDGDGLLDVDEINVYFTDPYNADSDQDGLTDGLEVNRHQTHPQDKDTDDDSIGDGVEVNNLGTNPKDPDSDDDGLTDGAEVNLYRTDPLDADSTTTGCPMGGGAEVRHRPQNGDTDDDGLTDGAEVNVHRTNPQDGDSDDDGLSDGAEVNTYHSNPKDGDSDDDGVSDGAEVNPKLKDSDGDGLTDEEEIKLYRTDPFCADSDFDGLLDGEEVKVHKTNPLDGDSDDDGLGDGAEVTHFNTNPLDADSDNDGLDDGEEINVHGTDPEDPDSDNDGLNDGDEVNVYNTDPEEDDSDEDGVCDGAEVNVHHTNPKDEDSDNDGIPDGAEINTHKTDPNDEDSDDDGIADGAEVTLTDSDGDGLPDEDEVALYNTNPANADSDYDGLTDGAEVKRYQSNPLDKDTDDDGLGDGVEVTVGTDPHDATVTTTGSRTAVEINVHGSDPNDEDTDDDGLTDGAEVNLHRTDPEDADTDDDGLTDGAEVNTYRTNPKLADSDGDGLSDGAEVNTHKSDPNDGDSDDDGVPDAAEAKVKDSDGDGLSDTDEVRFRTNPKLADTDFDGLTDGAEILKHKTDPRNRDTDGDGVADGLEVNTYGSDPKDADTDDDGLTDGAEINVHDTNPTDADSDDDGLSDGAEVMTYHTNAKDGDSDDDGKADGAEVSASTDPWRSDHSV.

A signal peptide (or 23) is located at residues 1 to 20 (MSHLWCWLFLVLCLACLVLS). TSP type-3 repeat units follow at residues 24-38 (KDSDGDGLLDVDEIN), 47-56 (ADSDQDGLTD), 70-82 (KDTDDDSIGDGVE), 184-196 (GDSDDDGVSDGAE), 202-214 (KDSDGDGLTDEEE), and 248-260 (GDSDDDGLGDGAE). Residues 45–695 (YNADSDQDGL…TDPWRSDHSV (651 aa)) are disordered. Residues 59-70 (EVNRHQTHPQDK) show a composition bias toward basic and acidic residues. Composition is skewed to acidic residues over residues 271–283 (ADSDNDGLDDGEE), 291–306 (PEDPDSDNDGLNDGDE), and 313–324 (DPEEDDSDEDGV). TSP type-3 repeat units lie at residues 294-308 (PDSDNDGLNDGDEVN), 317-329 (DDSDEDGVCDGAE), 340-352 (EDSDNDGIPDGAE), 363-375 (EDSDDDGIADGAE), 379-393 (TDSDGDGLPDEDEVA), 402-414 (ADSDYDGLTDGAE), 425-437 (KDTDDDGLGDGVE), 470-482 (EDTDDDGLTDGAE), 493-505 (ADTDDDGLTDGAE), 516-528 (ADSDGDGLSDGAE), 539-551 (GDSDDDGVPDAAE), 555-569 (KDSDGDGLSDTDEVR), 600-609 (RDTDGDGVAD), 623-635 (ADTDDDGLTDGAE), and 646-658 (ADSDDDGLSDGAE). Acidic residues-rich tracts occupy residues 361–370 (NDEDSDDDGI) and 381–392 (SDGDGLPDEDEV). Acidic residues-rich tracts occupy residues 467-477 (PNDEDTDDDGL) and 491-500 (EDADTDDDGL). Acidic residues predominate over residues 537–546 (NDGDSDDDGV). The segment covering 589–603 (EILKHKTDPRNRDTD) has biased composition (basic and acidic residues). Residues 665–679 (NAKDGDSDDDGKADG) are compositionally biased toward basic and acidic residues.

The protein resides in the secreted. It is found in the endoplasmic reticulum. Functionally, may function as a calcium-binding protein. The sequence is that of Calcium-binding acidic-repeat protein from Euglena gracilis.